The chain runs to 260 residues: Small ribosomal subunit protein uS2 (260 aa).

Residues 223 to 260 (EGRQGEDEEEASQEVAEGVSKDSLEDLKKSVEEGSNEE) are disordered. Residues 241-254 (VSKDSLEDLKKSVE) show a composition bias toward basic and acidic residues.

The protein belongs to the universal ribosomal protein uS2 family.

This chain is Small ribosomal subunit protein uS2, found in Pediococcus pentosaceus (strain ATCC 25745 / CCUG 21536 / LMG 10740 / 183-1w).